The following is a 143-amino-acid chain: Small ribosomal subunit protein uS11c (143 aa).

Belongs to the universal ribosomal protein uS11 family. As to quaternary structure, part of the 30S ribosomal subunit.

It localises to the plastid. It is found in the chloroplast. The sequence is that of Small ribosomal subunit protein uS11c from Zea mays (Maize).